The following is a 61-amino-acid chain: Photosystem II reaction center protein K (61 aa).

The propeptide occupies 1–24 (MPNILSLTCICFNSVLYPTSFFFA). A helical membrane pass occupies residues 32–52 (IFNPIVDIMPVIPLFFFLLAF).

The protein belongs to the PsbK family. As to quaternary structure, PSII is composed of 1 copy each of membrane proteins PsbA, PsbB, PsbC, PsbD, PsbE, PsbF, PsbH, PsbI, PsbJ, PsbK, PsbL, PsbM, PsbT, PsbX, PsbY, PsbZ, Psb30/Ycf12, at least 3 peripheral proteins of the oxygen-evolving complex and a large number of cofactors. It forms dimeric complexes. Detected in both etioplasts and green leaves; PSII is only assembled in green leaves.

It localises to the plastid. It is found in the chloroplast thylakoid membrane. In terms of biological role, one of the components of the core complex of photosystem II (PSII). PSII is a light-driven water:plastoquinone oxidoreductase that uses light energy to abstract electrons from H(2)O, generating O(2) and a proton gradient subsequently used for ATP formation. It consists of a core antenna complex that captures photons, and an electron transfer chain that converts photonic excitation into a charge separation. This Hordeum vulgare (Barley) protein is Photosystem II reaction center protein K.